The chain runs to 504 residues: MPAQAVVGTNSYLFRTVHAEVKGLRYLDVRAGKELSVSQKKALKEAVKELDAEGVVAITGDCGSFVHYQTAVRRMTKTPAVLSPLLQAPLLATMYMKEETILVLTNDSSDYDQAALESNLVEIGLSQEDAARFVIQGLQHIEGFSTSEVADMSDERTWAMVDTSERLRLEIMSTIEAAKKANPSLRAILLESTLLPSFSDSMRQTRGVPVFDAITLADYLAAASTDNPRFGSNIDASVWSSAMERANVMDELSQRATPAIGILRIDYSYPPAPGDVDYPGSYYYRTVQEVAAGLTFEAAQEGRPLTAQQREAMEGAIRRLEAAKGVVGITGDCGFLMNYQVDARRMSHLPCFISAMMQCHMLAASFAADEEFLVLTANGKSLAPKFGEMLSLAHVTRPEDQARFHILGCEDVDGFDAVAKGEAVDVARVTPGIVALAKAAAARRPKVRAVLLECTELPPYADALRHALRIPVLDAITLVDFVHSASTDNPAFGVDFQKSSKVFV.

Belongs to the aspartate/glutamate racemases family. ALMA1 subfamily. Homotetramer.

It catalyses the reaction S,S-dimethyl-beta-propiothetin = acrylate + dimethyl sulfide + H(+). In terms of biological role, mediates cleavage of dimethylsulfoniopropionate (DMSP) into dimethyl sulfide (DMS) and acrylate. DMS is the principal form by which sulfur is transported from oceans to the atmosphere and is a key component of the ocean sulfur cycle. This chain is Dimethylsulfoniopropionate lyase 5, found in Emiliania huxleyi (strain CCMP1516).